Reading from the N-terminus, the 327-residue chain is Zinc transport protein ZntB (327 aa).

Over 1 to 273 (MEGIKGSEVN…SRRTYTMSLM (273 aa)) the chain is Cytoplasmic. A helical membrane pass occupies residues 274–294 (AMVFLPSTFLTGLFGVNLGGI). The Periplasmic portion of the chain corresponds to 295-300 (PGGGYQ). Residues 301–321 (FGFSAFCIMLVVLIGGVAWWL) traverse the membrane as a helical segment. Residues 322 to 327 (HRSKWL) lie on the Cytoplasmic side of the membrane.

It belongs to the CorA metal ion transporter (MIT) (TC 1.A.35) family.

It is found in the cell inner membrane. The enzyme catalyses Zn(2+)(out) + H(+)(out) = Zn(2+)(in) + H(+)(in). Its function is as follows. Zinc transporter. Acts as a Zn(2+):proton symporter, which likely mediates zinc ion uptake. This is Zinc transport protein ZntB from Enterobacter sp. (strain 638).